The following is a 295-amino-acid chain: MELIQDTSRPPLEYVKGVPLIKYFAEALGPLQSFRARPDDLLISTYPKSGTTWVSQILDMIYQGGDLEKCRRAPIFMRVPFLEFKVPGIPSGMETLKDTPAPRLLKTHLPLALLPQTLLDQKVKVVYVARNAKDVAVSYYHFYHMAKVHPEPGTWDSFLEKFMAGEVSYGSWYQHVQEWWELSHTHPVLYLFYEDMKENPKREIWKILEFVGRSLPEETVDLMVQHTSFKEMKKNPMANYTTIPQELMDHSISPFMRKGMTGDWKTTFTVAQNEHFDVDYAEKMAGCSLSFRSEL.

K48–W53 lines the 3'-phosphoadenylyl sulfate pocket. A substrate-binding site is contributed by K106 to H108. The active-site Proton acceptor is H108. 3'-phosphoadenylyl sulfate-binding positions include R130, S138, Y193, T227 to M232, and F255 to G259. At S138 the chain carries Phosphoserine.

Belongs to the sulfotransferase 1 family. In terms of assembly, homodimer.

Its subcellular location is the cytoplasm. It catalyses the reaction a phenol + 3'-phosphoadenylyl sulfate = an aryl sulfate + adenosine 3',5'-bisphosphate + H(+). The catalysed reaction is 17beta-estradiol + 3'-phosphoadenylyl sulfate = 17beta-estradiol 3-sulfate + adenosine 3',5'-bisphosphate + H(+). It carries out the reaction 4-ethylphenol + 3'-phosphoadenylyl sulfate = 4-ethylphenyl sulfate + adenosine 3',5'-bisphosphate + H(+). The enzyme catalyses 4-nitrophenol + 3'-phosphoadenylyl sulfate = 4-nitrophenyl sulfate + adenosine 3',5'-bisphosphate. It catalyses the reaction dopamine + 3'-phosphoadenylyl sulfate = dopamine 3-O-sulfate + adenosine 3',5'-bisphosphate + H(+). The catalysed reaction is dopamine + 3'-phosphoadenylyl sulfate = dopamine 4-O-sulfate + adenosine 3',5'-bisphosphate + H(+). It carries out the reaction 3,3',5-triiodo-L-thyronine + 3'-phosphoadenylyl sulfate = 3,3',5-triiodo-L-thyronine sulfate + adenosine 3',5'-bisphosphate + H(+). The enzyme catalyses 3,3',5'-triiodo-L-thyronine + 3'-phosphoadenylyl sulfate = 3,3',5'-triiodo-L-thyronine sulfate + adenosine 3',5'-bisphosphate + H(+). It catalyses the reaction 3,3'-diiodo-L-thyronine + 3'-phosphoadenylyl sulfate = 3,3'-diiodo-L-thyronine sulfate + adenosine 3',5'-bisphosphate + H(+). The catalysed reaction is L-thyroxine + 3'-phosphoadenylyl sulfate = L-thyroxine sulfate + adenosine 3',5'-bisphosphate + H(+). Its function is as follows. Sulfotransferase that utilizes 3'-phospho-5'-adenylyl sulfate (PAPS) as sulfonate donor to catalyze the sulfate conjugation of a wide variety of acceptor molecules bearing a hydroxyl or an amine group. Sulfonation increases the water solubility of most compounds, and therefore their renal excretion, but it can also result in bioactivation to form active metabolites. Displays broad substrate specificity for small phenolic compounds. Plays an important role in the sulfonation of endogenous molecules such as steroid hormones. Mediates also the metabolic activation of carcinogenic N-hydroxyarylamines leading to highly reactive intermediates capable of forming DNA adducts, potentially resulting in mutagenesis. May play a role in gut microbiota-host metabolic interaction. O-sulfonates 4-ethylphenol (4-EP), a dietary tyrosine-derived metabolite produced by gut bacteria. The product 4-EPS crosses the blood-brain barrier and may negatively regulate oligodendrocyte maturation and myelination, affecting the functional connectivity of different brain regions associated with the limbic system. Catalyzes the sulfate conjugation of dopamine. Catalyzes the sulfation of T4 (L-thyroxine/3,5,3',5'-tetraiodothyronine), T3 (3,5,3'-triiodothyronine), rT3 (3,3',5'-triiodothyronine) and 3,3'-T2 (3,3'-diiodothyronine), with a substrate preference of 3,3'-T2 &gt; rT3 &gt; T3 &gt; T4. This chain is Sulfotransferase 1A1 (SULT1A1), found in Macaca fascicularis (Crab-eating macaque).